A 540-amino-acid polypeptide reads, in one-letter code: Phenylalanine--tRNA ligase beta subunit (540 aa).

The region spanning 270 to 347 (MTPRTLNVPR…IGYGFDKIKS (78 aa)) is the B5 domain. The Mg(2+) site is built by aspartate 325, aspartate 331, glutamate 334, and aspartate 335.

It belongs to the phenylalanyl-tRNA synthetase beta subunit family. Type 2 subfamily. In terms of assembly, tetramer of two alpha and two beta subunits. Mg(2+) is required as a cofactor.

The protein localises to the cytoplasm. It carries out the reaction tRNA(Phe) + L-phenylalanine + ATP = L-phenylalanyl-tRNA(Phe) + AMP + diphosphate + H(+). This Methanococcoides burtonii (strain DSM 6242 / NBRC 107633 / OCM 468 / ACE-M) protein is Phenylalanine--tRNA ligase beta subunit.